Reading from the N-terminus, the 321-residue chain is Protein-L-histidine N-pros-methyltransferase (321 aa).

An N-terminal signal peptide occupies residues 1–24; the sequence is MRLWLCWLGCYTLLLWALRRRMWA. N-linked (GlcNAc...) asparagine glycosylation occurs at Asn89. Positions 177, 213, and 298 each coordinate S-adenosyl-L-homocysteine.

This sequence belongs to the METTL9 family.

It is found in the endoplasmic reticulum. Its subcellular location is the mitochondrion. The catalysed reaction is L-histidyl-[protein] + S-adenosyl-L-methionine = N(pros)-methyl-L-histidyl-[protein] + S-adenosyl-L-homocysteine + H(+). Functionally, protein-histidine N-methyltransferase that specifically catalyzes 1-methylhistidine (pros-methylhistidine) methylation of target proteins. Mediates methylation of proteins with a His-x-His (HxH) motif (where 'x' is preferably a small amino acid); 1-methylhistidine modification may affect the binding of zinc and other metals to its target proteins. In Gallus gallus (Chicken), this protein is Protein-L-histidine N-pros-methyltransferase.